The following is a 208-amino-acid chain: Small ribosomal subunit protein uS4 (208 aa).

Residues 98–159 (RRLDNVVYRL…KSRNVAAISE (62 aa)) form the S4 RNA-binding domain.

The protein belongs to the universal ribosomal protein uS4 family. As to quaternary structure, part of the 30S ribosomal subunit. Contacts protein S5. The interaction surface between S4 and S5 is involved in control of translational fidelity.

Its function is as follows. One of the primary rRNA binding proteins, it binds directly to 16S rRNA where it nucleates assembly of the body of the 30S subunit. In terms of biological role, with S5 and S12 plays an important role in translational accuracy. This chain is Small ribosomal subunit protein uS4, found in Trichlorobacter lovleyi (strain ATCC BAA-1151 / DSM 17278 / SZ) (Geobacter lovleyi).